The sequence spans 1370 residues: MPYSYTEKKRIRKSFAKREDVQNVPFLLATQLQSYLTFLQADTATSDRVNEGLQAAFSSIFPIVSHNGMARLEFVSYALGEPVFDVKECQQRGLTYASPLRAKVRLVLLDREVSKPTIKEVKEQEVYMGEIPLMTGTGSFVINGTERVIVSQLHRSPGVFFEHDRGKTHSSGKLLFSARVIPYRGSWLDFEFDPKDVLFFRVDRRRKMPVTILLKAIGMTPESILAHFFDFDNFELKSEGGMMEFVAERWKGEMARFDIADRDGKVIVEKDKRINAKHLRDLAAGGIQRVSVPEDFLYGRVLAKNIVDPDTGEVVAHANDEITESVLNAMRAANVRDIQTLYTNDLDRGPYISQTLRADETADQMAARVAIYRMMRPGEPPTEEAVEALFQRLFYSEETYDLSRVGRMKVNSRLGRGDDSTGPMTLTNEDILETIKVLVELRNGRGQIDDIDHLGNRRVRCVGELAENQFRAGLVRVERAVKERLGQAETENLMPHDLINSKPISAAIKEFFGSSQLSQFMDQTNPLSEITHKRRVSALGPGGLTRERAGFEVRDVHPTHYGRVCPIETPEGPNIGLINSMALYARLNEYGFLETPYRKIIDGKVSDQIDYLSAIEESHYVIAQANAALDDEGRFVDDLVACREAGETMLTAPGNVHYMDVAPSQIVSVAASLIPFLEHDDANRALMGANMQRQAVPCLRPEKPLVGTGVERTVAVDSGTTVQALRGGVVDHVDADRVVIRVNDEENVAGEVGVDIYNLIKYTRSNQNTNINQRPIVARGDKVAKGDVLADGASTDLGELALGQNMLIAFMPWNGYNFEDSILISERVVADDRYTSIHIEELTVVARDTKLGPEEITRDISNLAETQLNRLDDSGIVYIGAEVSADDVLVGKVTPKGETQLTPEEKLLRAIFGEKASDVKDTSLRVPSGMTGTVIDVQVFTREGIVRDKRAQSIIDDELRRYRQDLNDQLRIVENDQFDRIEKMLVGKAVNGGPRKLAKGATLTKAYLADLDRWQWFDIRLADEQHAVVLEQAKESLEQKRHQFDLAFEEKRKKLTQGDELPPGVLKMIKVYLAVKRRLQPGDKMAGRHGNKGVVSRITPVEDMPHMADGTPADIVLNPLGVPSRMNVGQVLEVHLGWAAKGVGYRIADMLRDERTAQAKSVRGYLEKVYNTTGSSAHIDSLTDEEVLELANNLKKGVPFATPVFDGATEEEIGKMLELAYPDDVAARMRLTASRSQAWLYDGRTGEQFERPVTIGYMHYLKLHHLVDDKMHARSTGPYSLVTQQPLGGKAQFGGQRFGEMEVWALEAYGASYTLQEMLTVKSDDITGRTKVYENIVKGDHVIDAGMPESFNVLVKEIRSLALDMDLERN.

It belongs to the RNA polymerase beta chain family. The RNAP catalytic core consists of 2 alpha, 1 beta, 1 beta' and 1 omega subunit. When a sigma factor is associated with the core the holoenzyme is formed, which can initiate transcription.

It carries out the reaction RNA(n) + a ribonucleoside 5'-triphosphate = RNA(n+1) + diphosphate. In terms of biological role, DNA-dependent RNA polymerase catalyzes the transcription of DNA into RNA using the four ribonucleoside triphosphates as substrates. This Bordetella bronchiseptica (strain ATCC BAA-588 / NCTC 13252 / RB50) (Alcaligenes bronchisepticus) protein is DNA-directed RNA polymerase subunit beta.